The following is a 411-amino-acid chain: LL-diaminopimelate aminotransferase (411 aa).

Positions 15 and 42 each coordinate substrate. Pyridoxal 5'-phosphate contacts are provided by residues Tyr72, 108-109 (SK), Tyr132, Asn187, Tyr218, and 246-248 (SFS). Lys109, Tyr132, and Asn187 together coordinate substrate. Lys249 carries the N6-(pyridoxal phosphate)lysine modification. Residues Arg257 and Asn292 each contribute to the pyridoxal 5'-phosphate site. Residues Asn292 and Arg388 each contribute to the substrate site.

Belongs to the class-I pyridoxal-phosphate-dependent aminotransferase family. LL-diaminopimelate aminotransferase subfamily. In terms of assembly, homodimer. Pyridoxal 5'-phosphate is required as a cofactor.

It carries out the reaction (2S,6S)-2,6-diaminopimelate + 2-oxoglutarate = (S)-2,3,4,5-tetrahydrodipicolinate + L-glutamate + H2O + H(+). Its pathway is amino-acid biosynthesis; L-lysine biosynthesis via DAP pathway; LL-2,6-diaminopimelate from (S)-tetrahydrodipicolinate (aminotransferase route): step 1/1. In terms of biological role, involved in the synthesis of meso-diaminopimelate (m-DAP or DL-DAP), required for both lysine and peptidoglycan biosynthesis. Catalyzes the direct conversion of tetrahydrodipicolinate to LL-diaminopimelate. The sequence is that of LL-diaminopimelate aminotransferase from Trichodesmium erythraeum (strain IMS101).